Consider the following 366-residue polypeptide: Anhydro-N-acetylmuramic acid kinase (366 aa).

Residue 10–17 participates in ATP binding; it reads GTSMDGID.

The protein belongs to the anhydro-N-acetylmuramic acid kinase family.

It carries out the reaction 1,6-anhydro-N-acetyl-beta-muramate + ATP + H2O = N-acetyl-D-muramate 6-phosphate + ADP + H(+). The protein operates within amino-sugar metabolism; 1,6-anhydro-N-acetylmuramate degradation. Its pathway is cell wall biogenesis; peptidoglycan recycling. In terms of biological role, catalyzes the specific phosphorylation of 1,6-anhydro-N-acetylmuramic acid (anhMurNAc) with the simultaneous cleavage of the 1,6-anhydro ring, generating MurNAc-6-P. Is required for the utilization of anhMurNAc either imported from the medium or derived from its own cell wall murein, and thus plays a role in cell wall recycling. The sequence is that of Anhydro-N-acetylmuramic acid kinase from Legionella pneumophila (strain Lens).